The sequence spans 202 residues: Mevalonate-3-phosphate 5-kinase (202 aa).

The catalysed reaction is (R)-3-phosphomevalonate + ATP = (R)-3,5-bisphosphomevalonate + ADP + H(+). It participates in isoprenoid biosynthesis; isopentenyl diphosphate biosynthesis via mevalonate pathway. Its function is as follows. Phosphorylates mevalonate 3-phosphate to form mevalonate 3,5-bisphosphate. Functions in an alternative mevalonate pathway, only present in extreme acidophiles of the Thermoplasmatales order, which passes through mevalonate 3-phosphate rather than mevalonate 5-phosphate. In Thermoplasma acidophilum (strain ATCC 25905 / DSM 1728 / JCM 9062 / NBRC 15155 / AMRC-C165), this protein is Mevalonate-3-phosphate 5-kinase.